The primary structure comprises 209 residues: HTLV-1 basic zipper factor (209 aa).

The tract at residues 48–162 (DGLLSLEEES…SARKEKMQEL (115 aa)) is disordered. 2 stretches are compositionally biased toward basic and acidic residues: residues 70-87 (APPRGETHRDRQRRAEEK) and 94-114 (REKEEEKQTAEYLKRKEEEKA). A Nuclear localization signal 1 motif is present at residues 87-92 (KRKRKK). 2 consecutive short sequence motifs (nuclear localization signal) follow at residues 116–120 (RRRRA) and 137–141 (RRERK). The span at 122–160 (KKAADVARRKQEEQERRERKWRQGAEKAKQHSARKEKMQ) shows a compositional bias: basic and acidic residues.

The protein belongs to the HTLV-1 HBZ protein family. As to quaternary structure, interacts with host ATF4; this interaction inhibits viral RNA transcriptional activation by preventing ATF4 binding to Tax-responsive elements. Interacts with host CREB1; this interaction inhibits host CREB1 transcriptional activity. Interacts with host JUN, JUNB and JUND. Interacts with host EP300.

It localises to the host nucleus. Its function is as follows. Contributes to the regulation of viral RNA transcription by interacting with host proteins involved in transcriptional activation such as ATF4, or CREB1, and by inhibiting their activity. Additionally, HBZ suppresses host NF-kappa-B-driven transcription mediated by host RELA as well as transcription of some classical NF-kappa-B target genes, including IL8, IL2RA, IRF4, VCAM1, and VEGFA. The sequence is that of HTLV-1 basic zipper factor (HBZ) from Homo sapiens (Human).